We begin with the raw amino-acid sequence, 431 residues long: Putative malic acid transport protein (431 aa).

The next 10 helical transmembrane spans lie at 30–50 (FTWA…VTSL), 62–82 (GKII…CITF), 101–121 (VLFM…LYPY), 136–156 (ILYW…FYSL), 167–187 (IIPA…IASA), 201–221 (VVAG…VYAV), 239–259 (GMFI…DLAF), 284–304 (FMAL…FVSV), 318–338 (VSWF…QELG), and 346–366 (VCIV…ILIL). The span at 402 to 424 (EEEKDEAERSKRKAEESDGKTTR) shows a compositional bias: basic and acidic residues. A disordered region spans residues 402–431 (EEEKDEAERSKRKAEESDGKTTRELTSGGL).

This sequence belongs to the tellurite-resistance/dicarboxylate transporter (TDT) family.

It is found in the membrane. The chain is Putative malic acid transport protein from Schizosaccharomyces pombe (strain 972 / ATCC 24843) (Fission yeast).